The primary structure comprises 603 residues: Sabinene hydrate synthase, chloroplastic (603 aa).

The N-terminal 47 residues, 1-47 (MSTISINHVGLLRNPLHGKSKRASINKSWSLCLPRSSSASRLVKPCR), are a transit peptide targeting the chloroplast. Mn(2+)-binding residues include D357 and D361. Positions 357–361 (DDVYD) match the DDXXD motif motif. Homodimerization regions lie at residues 363 to 369 (YGTLDEL) and 435 to 472 (EAEW…VSIP). D501 and E509 together coordinate Mn(2+).

It belongs to the terpene synthase family. Homodimer. It depends on Mn(2+) as a cofactor. Requires Mg(2+) as cofactor.

The protein resides in the plastid. The protein localises to the chloroplast. It carries out the reaction (2E)-geranyl diphosphate + H2O = sabinene hydrate + diphosphate. It functions in the pathway secondary metabolite biosynthesis; terpenoid biosynthesis. Its function is as follows. Involved in the biosynthesis of phenolic monoterpenes natural products. Monoterpene synthase which catalyzes the conversion of geranyl diphosphate (GPP) to sabinene hydrate, mainly (Z)-sabinene hydrate and to a lower extent (E)-sabinene hydrate, and the formation of minor amounts and traces of several other monoterpenes (e.g. mainly alpha-thujene, alpha-pinene and myrcene). The chain is Sabinene hydrate synthase, chloroplastic from Thymus vulgaris (Thyme).